A 359-amino-acid chain; its full sequence is Peptide chain release factor 1 (359 aa).

Gln236 is modified (N5-methylglutamine).

The protein belongs to the prokaryotic/mitochondrial release factor family. In terms of processing, methylated by PrmC. Methylation increases the termination efficiency of RF1.

It is found in the cytoplasm. Its function is as follows. Peptide chain release factor 1 directs the termination of translation in response to the peptide chain termination codons UAG and UAA. This is Peptide chain release factor 1 from Streptococcus pyogenes serotype M3 (strain ATCC BAA-595 / MGAS315).